The following is a 129-amino-acid chain: uncharacterized protein (129 aa).

Residues 77–97 (ILAVFIISFIIVVVGVLLLGL) form a helical membrane-spanning segment. The segment at 109–129 (SSNDKKLQSNDEEKQALAEKA) is disordered. The span at 111–129 (NDKKLQSNDEEKQALAEKA) shows a compositional bias: basic and acidic residues.

The protein resides in the vacuole membrane. This is an uncharacterized protein from Saccharomyces cerevisiae (strain ATCC 204508 / S288c) (Baker's yeast).